A 522-amino-acid chain; its full sequence is Tubulin-specific chaperone E (522 aa).

The region spanning 27–71 is the CAP-Gly domain; that stretch reads GNVPPTPGLWLGVEWDNHLRGKHNGTHEGTKYFTCSHPTGGSFIR. LRR repeat units lie at residues 149–170, 175–196, 201–222, 226–248, 249–270, 274–295, and 303–324; these read NIMTADLSKNLFSSWESLAHIS, NLTSLDLSENKLNPSSNPSSLA, NLKVLSLNRTGMKWNEILQCAS, ALEELHLVSNDISLLEQPVNNLQ, NLTILDISNNKIVDGNQLHTIA, RLKQVIVSNNIISSISFPDVDF, and SLTSLAVNGNNISEWCVINELH. The 43-residue stretch at 337 to 379 folds into the LRRCT domain; that stretch reads NPLMDLDKNPETVRQLIIAKIENLKFLNKTEIFPTERRGAELD.

This sequence belongs to the TBCE family. Supercomplex made of cofactors A to E. Cofactors A and D function by capturing and stabilizing tubulin in a quasi-native conformation. Cofactor E binds to the cofactor D-tubulin complex; interaction with cofactor C then causes the release of tubulin polypeptides that are committed to the native state.

The protein resides in the cytoplasm. The protein localises to the cytoskeleton. Functionally, tubulin-folding protein; involved in the second step of the tubulin folding pathway. In Xenopus laevis (African clawed frog), this protein is Tubulin-specific chaperone E (tbce).